Consider the following 964-residue polypeptide: Collagen alpha-1(I) chain (964 aa).

Residues 1–964 (GGISVPGPMG…PGPPGPPGPP (964 aa)) are disordered. 4-hydroxyproline is present on residues proline 18, proline 21, proline 24, proline 33, proline 36, proline 39, proline 53, proline 68, proline 74, proline 83, and proline 89. The span at 56–70 (NGDDGEAGKPGRPGE) shows a compositional bias: basic and acidic residues. Lysine 92 is modified (5-hydroxylysine; alternate). O-linked (Gal...) hydroxylysine; alternate glycosylation is present at lysine 92. The residue at position 98 (serine 98) is a Phosphoserine. Composition is skewed to low complexity over residues 106-117 (DAGPAGPKQMGP) and 126-144 (PGAS…TGAA). Proline 126, proline 147, proline 156, proline 159, proline 186, proline 189, proline 201, proline 207, proline 216, proline 222, proline 225, and proline 240 each carry 4-hydroxyproline. Residues 146-158 (PPGPTGPAGPPGF) show a composition bias toward pro residues. Low complexity predominate over residues 192–231 (AGAAGPAGNPGADGQPGAKGANGAPGIAGAPGFPGARGPS). The residue at position 243 (lysine 243) is a 5-hydroxylysine. 8 positions are modified to 4-hydroxyproline: proline 249, proline 252, proline 260, proline 269, proline 284, proline 290, proline 299, and proline 305. Over residues 294–303 (GERGGPGSRG) the composition is skewed to gly residues. Lysine 314 carries the 5-hydroxylysine modification. Proline 323, proline 332, proline 338, proline 344, proline 353, proline 356, proline 365, proline 374, proline 379, proline 391, proline 400, proline 409, proline 412, proline 430, proline 447, proline 453, proline 459, proline 465, proline 471, proline 477, proline 489, proline 498, proline 510, and proline 519 each carry 4-hydroxyproline. Positions 347-373 (KGLTGSPGSPGPDGKTGPPGPAGQDGR) are enriched in low complexity. The span at 381–400 (ARGQAGVMGFPGPKGAAGEP) shows a compositional bias: low complexity. The span at 459–468 (PGEAGKPGEQ) shows a compositional bias: low complexity. Residue lysine 531 is modified to 5-hydroxylysine. Residues proline 537, proline 552, and proline 558 each carry the 4-hydroxyproline modification. Low complexity predominate over residues 564-578 (SGPSGPAGPTGARGA). Serine 567 carries the post-translational modification Phosphoserine. 8 positions are modified to 4-hydroxyproline: proline 579, proline 585, proline 588, proline 597, proline 603, proline 621, proline 630, and proline 639. A compositionally biased stretch (low complexity) spans 591-618 (AGFAGPPGADGQPGAKGEPGDAGAKGDA). Pro residues predominate over residues 620 to 632 (PPGPAGPTGPPGP). 5-hydroxylysine is present on lysine 642. Over residues 647-663 (SAGPPGATGFPGAAGRV) the composition is skewed to low complexity. 4-hydroxyproline is present on residues proline 651 and proline 657. Proline 665 carries the post-translational modification 3-hydroxyproline. Proline 666, proline 675, proline 678, proline 704, proline 712, proline 721, proline 739, proline 748, proline 751, proline 757, proline 772, proline 778, proline 784, proline 792, and proline 798 each carry 4-hydroxyproline. The span at 709-721 (KGSPGADGPAGAP) shows a compositional bias: low complexity. Residues 771-781 (PPGPMGPPGLA) are compositionally biased toward pro residues. Lysine 807 carries the 5-hydroxylysine modification. Residues 815–830 (PGPPGAPGAPGAPGPV) show a composition bias toward pro residues. 4-hydroxyproline occurs at positions 818, 821, and 824. Low complexity predominate over residues 850-864 (AGPAGARGPAGPQGP). Residues 865-879 (RGDKGETGEQGDRGI) are compositionally biased toward basic and acidic residues. Residue lysine 868 is modified to 5-hydroxylysine. Position 880 is a 5-hydroxylysine; alternate (lysine 880). Lysine 880 carries O-linked (Gal...) hydroxylysine; alternate glycosylation. Proline 895, proline 898, proline 916, and proline 931 each carry 4-hydroxyproline. A compositionally biased stretch (low complexity) spans 898-931 (PGEQGPSGASGPAGPRGPPGSAGSPGKDGLNGLP). A 3-hydroxyproline modification is found at proline 936. At proline 937 the chain carries 4-hydroxyproline. Pro residues predominate over residues 949–964 (VGPPGPPGPPGPPGPP). A 3-hydroxyproline modification is found at proline 951. Residue proline 952 is modified to 4-hydroxyproline. At proline 954 the chain carries 3-hydroxyproline. Residue proline 955 is modified to 4-hydroxyproline. Proline 957 bears the 3-hydroxyproline mark. A 4-hydroxyproline mark is found at proline 958, proline 961, and proline 964.

Belongs to the fibrillar collagen family. Trimers of one alpha 2(I) and two alpha 1(I) chains. Contains mostly 4-hydroxyproline. Proline residues at the third position of the tripeptide repeating unit (G-X-Y) are hydroxylated in some or all of the chains. In terms of processing, contains 3-hydroxyproline at a few sites. This modification occurs on the first proline residue in the sequence motif Gly-Pro-Hyp, where Hyp is 4-hydroxyproline. Post-translationally, lysine residues at the third position of the tripeptide repeating unit (G-X-Y) are 5-hydroxylated in some or all of the chains. O-glycosylated on hydroxylated lysine residues. The O-linked glycan consists of a Glc-Gal disaccharide. As to expression, expressed in bones.

It localises to the secreted. The protein resides in the extracellular space. The protein localises to the extracellular matrix. Type I collagen is a member of group I collagen (fibrillar forming collagen). This is Collagen alpha-1(I) chain from Parocnus serus (Greater Haitian ground sloth).